The primary structure comprises 287 residues: uncharacterized protein (287 aa).

This sequence belongs to the AllH family.

This is an uncharacterized protein from Escherichia coli (strain K12).